The sequence spans 347 residues: Phenylalanine--tRNA ligase alpha subunit (347 aa).

Glu261 contributes to the Mg(2+) binding site.

The protein belongs to the class-II aminoacyl-tRNA synthetase family. Phe-tRNA synthetase alpha subunit type 1 subfamily. Tetramer of two alpha and two beta subunits. It depends on Mg(2+) as a cofactor.

It is found in the cytoplasm. The catalysed reaction is tRNA(Phe) + L-phenylalanine + ATP = L-phenylalanyl-tRNA(Phe) + AMP + diphosphate + H(+). The protein is Phenylalanine--tRNA ligase alpha subunit of Streptococcus mutans serotype c (strain ATCC 700610 / UA159).